The sequence spans 177 residues: Protein FATTY ACID EXPORT 4, chloroplastic (177 aa).

A chloroplast-targeting transit peptide spans 1–63 (MWSLALTLPS…AELSELAPVV (63 aa)). The next 3 helical transmembrane spans lie at 85 to 105 (KGSLFGGLTGSVLMASAYFLT), 111 to 131 (RVLGDTIGLGAAFLFSSVFGF), and 140 to 160 (VPAGPLLLLSIGMLSFFVMAY).

This sequence belongs to the TMEM14 family.

It is found in the plastid. It localises to the chloroplast membrane. Its function is as follows. May be involved in free fatty acids export from the plastids. This is Protein FATTY ACID EXPORT 4, chloroplastic from Arabidopsis thaliana (Mouse-ear cress).